Reading from the N-terminus, the 728-residue chain is Probable 3',5'-cyclic phosphodiesterase pde-5 (728 aa).

The region spanning Ser-214–Arg-371 is the GAF domain. The PDEase domain occupies Cys-390–Gln-709. Catalysis depends on His-465, which acts as the Proton donor. 4 residues coordinate a divalent metal cation: His-469, His-503, Asp-504, and Asp-614. Residues Met-691–Glu-728 adopt a coiled-coil conformation. Residues Glu-708–Glu-728 form a disordered region. Residues Leu-716 to Glu-728 are compositionally biased toward polar residues.

Belongs to the cyclic nucleotide phosphodiesterase family. A divalent metal cation serves as cofactor.

The catalysed reaction is a nucleoside 3',5'-cyclic phosphate + H2O = a nucleoside 5'-phosphate + H(+). Functionally, redundantly with pde-1, plays a role in the AFD thermosensory neurons to regulate microvilli receptive ending morphology, possibly by regulating cGMP levels. This chain is Probable 3',5'-cyclic phosphodiesterase pde-5 (pde-5), found in Caenorhabditis elegans.